An 817-amino-acid chain; its full sequence is DNA gyrase subunit A (817 aa).

Residues 39-505 (LPDARDGLKP…AVEDVSIEDL (467 aa)) enclose the Topo IIA-type catalytic domain. Catalysis depends on tyrosine 127, which acts as the O-(5'-phospho-DNA)-tyrosine intermediate. Positions 532 to 538 (QGRGGKG) match the GyrA-box motif.

It belongs to the type II topoisomerase GyrA/ParC subunit family. As to quaternary structure, heterotetramer, composed of two GyrA and two GyrB chains. In the heterotetramer, GyrA contains the active site tyrosine that forms a transient covalent intermediate with DNA, while GyrB binds cofactors and catalyzes ATP hydrolysis.

Its subcellular location is the cytoplasm. The catalysed reaction is ATP-dependent breakage, passage and rejoining of double-stranded DNA.. In terms of biological role, a type II topoisomerase that negatively supercoils closed circular double-stranded (ds) DNA in an ATP-dependent manner to modulate DNA topology and maintain chromosomes in an underwound state. Negative supercoiling favors strand separation, and DNA replication, transcription, recombination and repair, all of which involve strand separation. Also able to catalyze the interconversion of other topological isomers of dsDNA rings, including catenanes and knotted rings. Type II topoisomerases break and join 2 DNA strands simultaneously in an ATP-dependent manner. The sequence is that of DNA gyrase subunit A from Aminobacterium colombiense (strain DSM 12261 / ALA-1).